Consider the following 278-residue polypeptide: Lectin 6 (278 aa).

Positions 1-23 (MTLSSALIKIFITFLFLQNHVNS) are cleaved as a signal peptide. Residues Asn-116, Asn-139, and Asn-271 are each glycosylated (N-linked (GlcNAc...) asparagine).

Belongs to the leguminous lectin family.

In terms of biological role, may be involved in arbuscular mycorrhizal (AM) symbiosis with AM fungi. The polypeptide is Lectin 6 (Medicago truncatula (Barrel medic)).